We begin with the raw amino-acid sequence, 143 residues long: Large ribosomal subunit protein uL11 (143 aa).

It belongs to the universal ribosomal protein uL11 family. As to quaternary structure, part of the ribosomal stalk of the 50S ribosomal subunit. Interacts with L10 and the large rRNA to form the base of the stalk. L10 forms an elongated spine to which L12 dimers bind in a sequential fashion forming a multimeric L10(L12)X complex. Post-translationally, one or more lysine residues are methylated.

Functionally, forms part of the ribosomal stalk which helps the ribosome interact with GTP-bound translation factors. The protein is Large ribosomal subunit protein uL11 of Paenarthrobacter aurescens (strain TC1).